A 177-amino-acid polypeptide reads, in one-letter code: Protein-export protein SecB (177 aa).

The segment at 1-22 (MSDENNSGAAAPEAQNPGQNAA) is disordered. Residues 8 to 22 (GAAAPEAQNPGQNAA) are compositionally biased toward low complexity.

Belongs to the SecB family. Homotetramer, a dimer of dimers. One homotetramer interacts with 1 SecA dimer.

It is found in the cytoplasm. Functionally, one of the proteins required for the normal export of preproteins out of the cell cytoplasm. It is a molecular chaperone that binds to a subset of precursor proteins, maintaining them in a translocation-competent state. It also specifically binds to its receptor SecA. The polypeptide is Protein-export protein SecB (Paracoccus denitrificans (strain Pd 1222)).